Reading from the N-terminus, the 246-residue chain is UL16-binding protein 6 (246 aa).

Residues methionine 1–alanine 25 form the signal peptide. The MHC class I alpha-1 like stretch occupies residues aspartate 29–glutamate 117. Cysteine 50 and cysteine 66 are oxidised to a cystine. Residues asparagine 68 and asparagine 82 are each glycosylated (N-linked (GlcNAc...) asparagine). Residues proline 118–glycine 210 are MHC class I alpha-2 like. Residues cysteine 127 and cysteine 190 are joined by a disulfide bond. Residue glycine 218 is the site of GPI-anchor amidated glycine attachment. A propeptide spans threonine 219–isoleucine 246 (removed in mature form).

It belongs to the MHC class I family. Interacts with KLRK1/NKG2D. In terms of assembly, (Microbial infection) In CMV-infected cells, interacts with the viral glycoprotein UL16; this interaction causes relocalization from the cell surface to the cytoplasm and prevents binding to and activation of KLRK1/NKG2D, providing CMV with an immune evasion mechanism. As to expression, widely expressed. Expressed in trachea. Constitutively expressed in peripheral blood mononuclear cells, including B-cells and natural killer cells, as well as CD4+ and CD8+ T-cells and monocytes. Tends to be up-regulated in various lymphoid malignancies, including chronic lymphocytic leukemia.

It is found in the cell membrane. It localises to the endoplasmic reticulum. Functionally, binds and activates the KLRK1/NKG2D receptor, mediating natural killer cell cytotoxicity. The sequence is that of UL16-binding protein 6 (RAET1L) from Homo sapiens (Human).